Here is a 122-residue protein sequence, read N- to C-terminus: Large ribosomal subunit protein uL14 (122 aa).

Belongs to the universal ribosomal protein uL14 family. In terms of assembly, part of the 50S ribosomal subunit. Forms a cluster with proteins L3 and L19. In the 70S ribosome, L14 and L19 interact and together make contacts with the 16S rRNA in bridges B5 and B8.

In terms of biological role, binds to 23S rRNA. Forms part of two intersubunit bridges in the 70S ribosome. The sequence is that of Large ribosomal subunit protein uL14 from Rickettsia felis (strain ATCC VR-1525 / URRWXCal2) (Rickettsia azadi).